The primary structure comprises 415 residues: Homoserine O-acetyltransferase (415 aa).

The AB hydrolase-1 domain occupies 47 to 369; the sequence is NAVLVCHGLT…HGHDAFLVEP (323 aa). The active-site Nucleophile is S155. Residue R226 participates in substrate binding. Catalysis depends on residues D329 and H362. Residue D363 participates in substrate binding. Residues 383–415 form a disordered region; sequence GVAGRAVTDTAPDGGEPDEDEDFAPVHSSLFSR.

The protein belongs to the AB hydrolase superfamily. MetX family. In terms of assembly, homodimer.

Its subcellular location is the cytoplasm. It catalyses the reaction L-homoserine + acetyl-CoA = O-acetyl-L-homoserine + CoA. It participates in amino-acid biosynthesis; L-methionine biosynthesis via de novo pathway; O-acetyl-L-homoserine from L-homoserine: step 1/1. Functionally, transfers an acetyl group from acetyl-CoA to L-homoserine, forming acetyl-L-homoserine. The polypeptide is Homoserine O-acetyltransferase (Haloferax volcanii (strain ATCC 29605 / DSM 3757 / JCM 8879 / NBRC 14742 / NCIMB 2012 / VKM B-1768 / DS2) (Halobacterium volcanii)).